A 294-amino-acid chain; its full sequence is Glyceraldehyde-3-phosphate dehydrogenase (294 aa).

NAD(+) is bound by residues aspartate 19, arginine 63, and threonine 105. Residues 134-136 (SCT), threonine 165, 194-195 (TG), and arginine 217 contribute to the D-glyceraldehyde 3-phosphate site. Residue cysteine 135 is the Nucleophile of the active site.

It belongs to the glyceraldehyde-3-phosphate dehydrogenase family. Homotetramer.

It is found in the cytoplasm. The catalysed reaction is D-glyceraldehyde 3-phosphate + phosphate + NAD(+) = (2R)-3-phospho-glyceroyl phosphate + NADH + H(+). It participates in carbohydrate degradation; glycolysis; pyruvate from D-glyceraldehyde 3-phosphate: step 1/5. In terms of biological role, catalyzes the oxidative phosphorylation of glyceraldehyde 3-phosphate (G3P) to 1,3-bisphosphoglycerate (BPG) using the cofactor NAD. The first reaction step involves the formation of a hemiacetal intermediate between G3P and a cysteine residue, and this hemiacetal intermediate is then oxidized to a thioester, with concomitant reduction of NAD to NADH. The reduced NADH is then exchanged with the second NAD, and the thioester is attacked by a nucleophilic inorganic phosphate to produce BPG. The polypeptide is Glyceraldehyde-3-phosphate dehydrogenase (gap) (Shimwellia blattae (Escherichia blattae)).